Consider the following 353-residue polypeptide: Photosystem II protein D1 (353 aa).

Thr2 carries the N-acetylthreonine modification. Residue Thr2 is modified to Phosphothreonine. 3 helical membrane passes run 29–46 (YIGW…TATS), 118–133 (HFLL…EWEL), and 142–156 (WIAV…AATA). Chlorophyll a is bound at residue His118. Tyr126 serves as a coordination point for pheophytin a. [CaMn4O5] cluster-binding residues include Asp170 and Glu189. Residues 197–218 (FHMLGVAGVFGGSLFSAMHGSL) traverse the membrane as a helical segment. His198 contributes to the chlorophyll a binding site. A quinone-binding positions include His215 and 264–265 (SF). His215 is a binding site for Fe cation. Fe cation is bound at residue His272. Residues 274 to 288 (FLAAWPVVGIWFTAL) form a helical membrane-spanning segment. Residues His332, Glu333, Asp342, and Ala344 each contribute to the [CaMn4O5] cluster site. A propeptide spanning residues 345–353 (SVEAPSINA) is cleaved from the precursor.

Belongs to the reaction center PufL/M/PsbA/D family. As to quaternary structure, PSII is composed of 1 copy each of membrane proteins PsbA, PsbB, PsbC, PsbD, PsbE, PsbF, PsbH, PsbI, PsbJ, PsbK, PsbL, PsbM, PsbT, PsbX, PsbY, PsbZ, Psb30/Ycf12, at least 3 peripheral proteins of the oxygen-evolving complex and a large number of cofactors. It forms dimeric complexes. The D1/D2 heterodimer binds P680, chlorophylls that are the primary electron donor of PSII, and subsequent electron acceptors. It shares a non-heme iron and each subunit binds pheophytin, quinone, additional chlorophylls, carotenoids and lipids. D1 provides most of the ligands for the Mn4-Ca-O5 cluster of the oxygen-evolving complex (OEC). There is also a Cl(-1) ion associated with D1 and D2, which is required for oxygen evolution. The PSII complex binds additional chlorophylls, carotenoids and specific lipids. is required as a cofactor. Tyr-161 forms a radical intermediate that is referred to as redox-active TyrZ, YZ or Y-Z. Post-translationally, C-terminally processed by CTPA; processing is essential to allow assembly of the oxygen-evolving complex and thus photosynthetic growth.

The protein resides in the plastid. It is found in the chloroplast thylakoid membrane. The catalysed reaction is 2 a plastoquinone + 4 hnu + 2 H2O = 2 a plastoquinol + O2. Its function is as follows. Photosystem II (PSII) is a light-driven water:plastoquinone oxidoreductase that uses light energy to abstract electrons from H(2)O, generating O(2) and a proton gradient subsequently used for ATP formation. It consists of a core antenna complex that captures photons, and an electron transfer chain that converts photonic excitation into a charge separation. The D1/D2 (PsbA/PsbD) reaction center heterodimer binds P680, the primary electron donor of PSII as well as several subsequent electron acceptors. The sequence is that of Photosystem II protein D1 from Chara vulgaris (Common stonewort).